Here is a 309-residue protein sequence, read N- to C-terminus: Olfactory receptor 10V1 (309 aa).

Residues 1–25 (MEGINKTAKMQFFFRPFSPDPEVQM) are Extracellular-facing. N-linked (GlcNAc...) asparagine glycosylation occurs at asparagine 5. The chain crosses the membrane as a helical span at residues 26–46 (LIFVVFLMMYLTSLGGNATIA). Topologically, residues 47-54 (VIVQINHS) are cytoplasmic. Residues 55–75 (LHTPMYFFLANLAVLEIFYTS) traverse the membrane as a helical segment. Residues 76-100 (SITPLALANLLSMGKTPVSITGCGT) lie on the Extracellular side of the membrane. The cysteines at positions 98 and 190 are disulfide-linked. Residues 101-121 (QMFFFVFLGGADCVLLVVMAY) form a helical membrane-spanning segment. Topologically, residues 122 to 140 (DQFIAICHPLRYRLIMSWS) are cytoplasmic. Residues 141–161 (LCVELLVGSLVLGFLLSLPLT) form a helical membrane-spanning segment. Residues 162–198 (ILIFHLPFCHNDEIYHFYCDMPAVMRLACADTRVHKT) lie on the Extracellular side of the membrane. A helical transmembrane segment spans residues 199–218 (ALYIISFIVLSIPLSLISIS). Residues 219-238 (YVFIVVAILRIRSAEGRQQA) lie on the Cytoplasmic side of the membrane. A helical transmembrane segment spans residues 239–259 (YSTCSSHILVVLLQYGCTSFI). Over 260–272 (YLSPSSSYSPEMG) the chain is Extracellular. The helical transmembrane segment at 273–293 (RVVSVAYTFITPILNPLIYSL) threads the bilayer. Over 294–309 (RNKELKDALRKALRKF) the chain is Cytoplasmic.

This sequence belongs to the G-protein coupled receptor 1 family.

It is found in the cell membrane. In terms of biological role, odorant receptor. The protein is Olfactory receptor 10V1 (OR10V1) of Homo sapiens (Human).